Reading from the N-terminus, the 148-residue chain is Large ribosomal subunit protein bL9 (148 aa).

Belongs to the bacterial ribosomal protein bL9 family.

Binds to the 23S rRNA. The sequence is that of Large ribosomal subunit protein bL9 from Bacillus mycoides (strain KBAB4) (Bacillus weihenstephanensis).